Reading from the N-terminus, the 402-residue chain is TBC1 domain family member 20 (402 aa).

The disordered stretch occupies residues 1–27; that stretch reads MALRPSKGDGSAGRWDRGAGKADFNAK. The span at 14–26 shows a compositional bias: basic and acidic residues; it reads RWDRGAGKADFNA. Positions 59–245 constitute a Rab-GAP TBC domain; it reads LLTDEIRCQV…RLYDFFLACH (187 aa). 2 helical membrane passes run 237–257 and 366–386; these read LYDF…AVIV and FVKL…LAVV.

Its subcellular location is the membrane. GTPase-activating protein specific for Rab1 and Rab2 small GTPase families for which it can accelerate the intrinsic GTP hydrolysis rate by more than five orders of magnitude. Also shows GAP activity for RAB18 GTPase. Promotes RAB18 dissociation from the endoplasmic reticulum (ER) membrane into the cytosol, probably through stimulating RAB18 GTP-hydrolysis. Involved in maintaining endoplasmic reticulum structure. This Mus musculus (Mouse) protein is TBC1 domain family member 20.